The sequence spans 413 residues: Glutamate-1-semialdehyde 2,1-aminomutase (413 aa).

Lys260 bears the N6-(pyridoxal phosphate)lysine mark.

This sequence belongs to the class-III pyridoxal-phosphate-dependent aminotransferase family. HemL subfamily. Requires pyridoxal 5'-phosphate as cofactor.

It localises to the cytoplasm. It catalyses the reaction (S)-4-amino-5-oxopentanoate = 5-aminolevulinate. It participates in porphyrin-containing compound metabolism; protoporphyrin-IX biosynthesis; 5-aminolevulinate from L-glutamyl-tRNA(Glu): step 2/2. In Methanoregula boonei (strain DSM 21154 / JCM 14090 / 6A8), this protein is Glutamate-1-semialdehyde 2,1-aminomutase.